We begin with the raw amino-acid sequence, 78 residues long: Beta-defensin 135 (78 aa).

The N-terminal stretch at 1–24 (MATRSVLLALVVLNLLFYVPPGRS) is a signal peptide. Disulfide bonds link Cys37–Cys64 and Cys48–Cys66.

Belongs to the beta-defensin family.

It is found in the secreted. Has antibacterial activity. In Pan troglodytes (Chimpanzee), this protein is Beta-defensin 135 (DEFB135).